A 305-amino-acid chain; its full sequence is tRNA pseudouridine synthase B (305 aa).

The active-site Nucleophile is D41.

The protein belongs to the pseudouridine synthase TruB family. Type 1 subfamily.

The enzyme catalyses uridine(55) in tRNA = pseudouridine(55) in tRNA. Its function is as follows. Responsible for synthesis of pseudouridine from uracil-55 in the psi GC loop of transfer RNAs. The chain is tRNA pseudouridine synthase B from Prochlorococcus marinus (strain MIT 9515).